We begin with the raw amino-acid sequence, 207 residues long: LysM and putative peptidoglycan-binding domain-containing protein 2 (207 aa).

Residues 61-105 (IEHRLSPSDTLQGIALKYGVTMEQIKRANKLFSTDCIFLRKSLNI) form the LysM domain. The interval 186-207 (AQRLKEEDLRHDDSYATCSYQH) is disordered. A compositionally biased stretch (basic and acidic residues) spans 188-199 (RLKEEDLRHDDS).

This Xenopus tropicalis (Western clawed frog) protein is LysM and putative peptidoglycan-binding domain-containing protein 2 (lysmd2).